The chain runs to 305 residues: Putative HTH-type transcriptional regulatory protein Saci_1344 (305 aa).

Residues 128 to 183 (LREKREEKNMSLGELSQRLGVSRISVYDYEKEDSYVSIEVAEKLIEIFGDEVIGDI) enclose the HTH cro/C1-type domain. Positions 139-158 (LGELSQRLGVSRISVYDYEK) form a DNA-binding region, H-T-H motif.

In Sulfolobus acidocaldarius (strain ATCC 33909 / DSM 639 / JCM 8929 / NBRC 15157 / NCIMB 11770), this protein is Putative HTH-type transcriptional regulatory protein Saci_1344.